We begin with the raw amino-acid sequence, 105 residues long: U2-lycotoxin-Ls1a (105 aa).

The N-terminal stretch at 1-17 (MIKYVLISALLVVAVYS) is a signal peptide. The propeptide occupies 18-41 (FTIEDNEDALLEEAEDELDTEEER). 4 disulfide bridges follow: Cys51–Cys67, Cys58–Cys97, Cys60–Cys83, and Cys69–Cys81.

The protein belongs to the neurotoxin 04 (omega-agtx) family. 01 (type I omega-agtx) subfamily. Expressed by the venom gland.

It is found in the secreted. Insecticidal to house crickets. It induces an excitatory slow-onset impact that leads to irreversible spastic paralysis. It also modifies human voltage-gated potassium channel Kv1.5/KCNA5. Most likely, it binds to the voltage-sensing domain of the channel, suggesting it does not block the pore but prevents its opening at physiological membrane potentials. The recombinant peptide binds to the channel in an irreversible manner and slows down the hKv1.5 current activation kinetics. It is not toxic to mice, when intracranially injected (at 0.5 ug/g mouse). The protein is U2-lycotoxin-Ls1a of Lycosa singoriensis (Wolf spider).